A 158-amino-acid chain; its full sequence is C-type lection lectoxin-Enh3 (158 aa).

The N-terminal stretch at 1 to 23 is a signal peptide; that stretch reads MGQFTVVSLGLLAMFLSLSGAKG. 3 disulfides stabilise this stretch: C26–C37, C54–C154, and C129–C146. The C-type lectin domain maps to 33–155; it reads RNGVCNKLFP…CASLHPFICQ (123 aa). The Mannose-binding motif lies at 119–121; the sequence is EPN. Ca(2+)-binding residues include E127, N142, and D143.

Belongs to the true venom lectin family. In terms of tissue distribution, expressed by the venom gland.

Its subcellular location is the secreted. Functionally, mannose-binding lectin which recognizes specific carbohydrate structures and agglutinates a variety of animal cells by binding to cell-surface glycoproteins and glycolipids. May be a calcium-dependent lectin. This Pseudoferania polylepis (Macleay's water snake) protein is C-type lection lectoxin-Enh3.